The following is a 1001-amino-acid chain: MDVTEVPWRRLPQFSVSSRASWLVSSGFPLSSYMFSHVERGKTFRLTLCFGVSRLRPRSAIPLRFLLSVFSEQPPSRLKGLCEVVWIVEADLAANEHLYVTGDPSTLGSWEPDCAISMYPTENDNEWEAKVKIASGVNFRYNYLLKAGYGSSSDVIWRPGPQFSLSVPSSVNQDRKIIIRDSWMSMSISSKSQESYGWGSWIDDAYLFPNCVTPAQSEDECTSADSAIEVPRTHLNDKQVGAESFLCDELAAFSSENSNLSALFSDNYQPIEEPWLIQESITLQHERNMQTDSEQDVESCDDNENNLNTDEQNHQLTETLLPDGGFFQSESIATTILINSSICTVQRIAVLEGGKLVELLLEPVKTNVQCDSVYLGVITKFVPHMGGAFVNIGSARHSFMDIKSNREPFIFPPFCDGSKKQAADGSPILSMNDIPAPHEIEHASYDFEASSLLDIDSNDPGESFHDDDDEHENDEYHVSDHLAGLVNGTVVNHGAVEVGSENGHIPMERGHSADSLDSNASVAKASKVMSSKDNKWIQVRKGTKIIVQVVKEGLGTKGPTLTAYPKLRSRFWVLLTRCKRIGVSKKISGVERTRLKVIAKTLQPQGFGLTVRTVAAGHSLEELQKDLDGLLLTWKNITDEAKSAALAADEGVEGAIPALLHRAMGQTLSVVQDYFNDKVEKMVVDSPRTYHEVTHYLQDMAPDLCNRVELHDKGIPLFDLYEIEEEIEGILSKRVPLSNGGSLVIEQTEALVSIDVNGGHGMFGQGNSQEKAILEVNLAAARQIAREIRLRDIGGIIVVDFIDMADESNKRLVYEEVKKAVERDRSLVKVSELSRHGLMEITRKRVRPSVTFMISEPCSCCHATGRVEALETTFSKIEQEICRQLAKMEKRGDLENPKSWPRFILRVDSHMSSFLTTGKRTRLAILSSSLKVWILLKVARHFTRGTFEVKPFMDEKTVNERQHQVAISLLKKADAIADSSGKKKLTLIPIKKEKTSGKQRR.

The transit peptide at 1–48 (MDVTEVPWRRLPQFSVSSRASWLVSSGFPLSSYMFSHVERGKTFRLTL) directs the protein to the chloroplast. The CBM20 domain occupies 76–185 (SRLKGLCEVV…KIIIRDSWMS (110 aa)). D755 is a binding site for Mg(2+). Residues 769 to 789 (QEKAILEVNLAAARQIAREIR) are a coiled coil. D800 is a Mg(2+) binding site. Positions 858 and 861 each coordinate Zn(2+).

Belongs to the RNase E/G family. In terms of assembly, part of a chloroplastic degradosome-like complex. Interacts with RHON1. A homotetramer formed by a dimer of dimers. It depends on Mg(2+) as a cofactor. Zn(2+) is required as a cofactor. As to expression, expressed in cotyledons, rosette and cauline leaves.

Its subcellular location is the plastid. It is found in the chloroplast stroma. In terms of biological role, involved in intercistronic processing of primary transcripts from chloroplast operons. The endonucleolytic activity of the enzyme depends on the number of phosphates at the 5' end, is inhibited by structured RNA, and preferentially cleaves A/U-rich sequences. This is Ribonuclease E/G-like protein, chloroplastic (RNE) from Arabidopsis thaliana (Mouse-ear cress).